Here is a 483-residue protein sequence, read N- to C-terminus: Regulatory protein ViaA (483 aa).

This sequence belongs to the ViaA family. Homodimer. Interacts with RavA.

It is found in the cytoplasm. Component of the RavA-ViaA chaperone complex, which may act on the membrane to optimize the function of some of the respiratory chains. ViaA stimulates the ATPase activity of RavA. In Shigella boydii serotype 18 (strain CDC 3083-94 / BS512), this protein is Regulatory protein ViaA.